Here is a 364-residue protein sequence, read N- to C-terminus: Putative [LysW]-aminoadipate semialdehyde/glutamate semialdehyde transaminase (364 aa).

Pyridoxal 5'-phosphate-binding positions include Gly-90 to Thr-91 and Phe-117. Arg-120 serves as a coordination point for substrate. Asp-202–Gln-205 lines the pyridoxal 5'-phosphate pocket. Lys-230 is subject to N6-(pyridoxal phosphate)lysine. Ser-254 is a substrate binding site. Thr-255 lines the pyridoxal 5'-phosphate pocket.

The protein belongs to the class-III pyridoxal-phosphate-dependent aminotransferase family. LysJ subfamily. Homodimer. The cofactor is pyridoxal 5'-phosphate.

It localises to the cytoplasm. The catalysed reaction is [amino-group carrier protein]-C-terminal-gamma-(L-lysyl)-L-glutamate + 2-oxoglutarate = [amino-group carrier protein]-C-terminal-N-(1-carboxy-5-oxopentan-1-yl)-L-glutamine + L-glutamate. It catalyses the reaction [amino-group carrier protein]-C-terminal-gamma-(L-ornithyl)-L-glutamate + 2-oxoglutarate = [amino-group carrier protein]-C-terminal-gamma-(L-glutamyl-5-semialdehyde)-L-glutamate + L-glutamate. The protein operates within amino-acid biosynthesis; L-lysine biosynthesis via AAA pathway; L-lysine from L-alpha-aminoadipate (Thermus route): step 4/5. Its pathway is amino-acid biosynthesis; L-arginine biosynthesis. Involved in both the arginine and lysine biosynthetic pathways. The chain is Putative [LysW]-aminoadipate semialdehyde/glutamate semialdehyde transaminase from Pyrococcus abyssi (strain GE5 / Orsay).